Reading from the N-terminus, the 282-residue chain is Putative phosphoenolpyruvate synthase regulatory protein (282 aa).

An ADP-binding site is contributed by 161 to 168 (GVSRSGKT).

Belongs to the pyruvate, phosphate/water dikinase regulatory protein family. PSRP subfamily.

It carries out the reaction [pyruvate, water dikinase] + ADP = [pyruvate, water dikinase]-phosphate + AMP + H(+). The enzyme catalyses [pyruvate, water dikinase]-phosphate + phosphate + H(+) = [pyruvate, water dikinase] + diphosphate. In terms of biological role, bifunctional serine/threonine kinase and phosphorylase involved in the regulation of the phosphoenolpyruvate synthase (PEPS) by catalyzing its phosphorylation/dephosphorylation. In Janthinobacterium sp. (strain Marseille) (Minibacterium massiliensis), this protein is Putative phosphoenolpyruvate synthase regulatory protein.